Reading from the N-terminus, the 206-residue chain is Superoxide dismutase [Mn] (206 aa).

Residues H27, H82, D168, and H172 each contribute to the Mn(2+) site.

The protein belongs to the iron/manganese superoxide dismutase family. In terms of assembly, homodimer. The cofactor is Mn(2+).

The catalysed reaction is 2 superoxide + 2 H(+) = H2O2 + O2. Its function is as follows. Destroys superoxide anion radicals which are normally produced within the cells and which are toxic to biological systems. This Salmonella typhi protein is Superoxide dismutase [Mn] (sodA).